The following is a 249-amino-acid chain: Enolase-phosphatase E1 (249 aa).

Residues Asp15 and Glu17 each contribute to the Mg(2+) site. Substrate-binding positions include 146-147 (SS) and Lys180. Asp205 contributes to the Mg(2+) binding site.

This sequence belongs to the HAD-like hydrolase superfamily. MasA/MtnC family. As to quaternary structure, monomer. It depends on Mg(2+) as a cofactor.

The protein resides in the cytoplasm. It localises to the nucleus. The enzyme catalyses 5-methylsulfanyl-2,3-dioxopentyl phosphate + H2O = 1,2-dihydroxy-5-(methylsulfanyl)pent-1-en-3-one + phosphate. It functions in the pathway amino-acid biosynthesis; L-methionine biosynthesis via salvage pathway; L-methionine from S-methyl-5-thio-alpha-D-ribose 1-phosphate: step 3/6. The protein operates within amino-acid biosynthesis; L-methionine biosynthesis via salvage pathway; L-methionine from S-methyl-5-thio-alpha-D-ribose 1-phosphate: step 4/6. Its function is as follows. Bifunctional enzyme that catalyzes the enolization of 2,3-diketo-5-methylthiopentyl-1-phosphate (DK-MTP-1-P) into the intermediate 2-hydroxy-3-keto-5-methylthiopentenyl-1-phosphate (HK-MTPenyl-1-P), which is then dephosphorylated to form the acireductone 1,2-dihydroxy-3-keto-5-methylthiopentene (DHK-MTPene). In Caenorhabditis briggsae, this protein is Enolase-phosphatase E1.